Consider the following 606-residue polypeptide: MADAMNELCNLTQHLQVDDDQLSNLKLKNGYSLFPHQEKVMLWMKYRENLTKKECRKEGEKTWGVRGGIISLCMGLGKTLTALAYSFQNKASFPTLVITSKTVMHEWKTEGVEKFFDSDNIRVLYLHRDYIKNIDKISRDDIMTYDIVITTYDVCLFACKKGNYFLQCFEMGEEQSLMKNKIVAIHTRKRKDANLPNLKGTAVIYGTPWERVICDESQKFANPKTMTYKCIMAVYGKYKWCLTGTPIRNYETDIWAQLRFCGYKGVERSHDWNRNGQGLIAFKDHNLISAIFTMSYDDAQMSLPEKTENNLTVKLEGQHKEIYEGILTETREMYKKMMNDLCSFTYVLAMFTRLRQCAIAPYLITPDAKRNSKEKKNCSEWCLDKFGGAGIKSSKILKIVEIIKSVTLNDNPNCNSNPKSLQLLAKEKAYSCFGSDYIKSSNFEISHPTKIIVFSMFTSCLDLLSEAIKEDYPNFKFVQVDGDTKNRSELFDQFKNDINTQGLFLTYKVGSEGLNLTEATHCICIEPWWTNAVHNQAKARLWRTGQTKQVYVHNVIIEGSIEEKIVEICKGKDDMAASYLEGKERIKSPVRAPKLDKFTLGKMLGI.

The Helicase ATP-binding domain maps to 59 to 264 (GEKTWGVRGG…WAQLRFCGYK (206 aa)). 72-79 (LCMGLGKT) lines the ATP pocket. The Helicase C-terminal domain occupies 437 to 586 (YIKSSNFEIS…ASYLEGKERI (150 aa)).

It belongs to the SNF2/RAD54 helicase family.

This chain is Putative helicase 172L, found in Invertebrate iridescent virus 6 (IIV-6).